A 320-amino-acid polypeptide reads, in one-letter code: 1,5-anhydro-D-fructose reductase (320 aa).

NADP(+) is bound at residue D35. Catalysis depends on Y40, which acts as the Proton donor. Residue H102 participates in substrate binding. Residues Q194 and 265–277 (IPGSITPSHIKEN) each bind NADP(+).

It belongs to the aldo/keto reductase family. In terms of assembly, monomer. In terms of tissue distribution, specifically expressed in testis. Expressed in testicular germ cells and testis interstitial cells.

The protein resides in the cytoplasm. The catalysed reaction is 1,5-anhydro-D-glucitol + NADP(+) = 1,5-anhydro-D-fructose + NADPH + H(+). Its activity is regulated as follows. Inhibited by p-chloromercuribenzoic acid and alkyliodines. Functionally, catalyzes the NADPH-dependent reduction of 1,5-anhydro-D-fructose (AF) to 1,5-anhydro-D-glucitol. Has low NADPH-dependent reductase activity towards 9,10-phenanthrenequinone (in vitro). In Homo sapiens (Human), this protein is 1,5-anhydro-D-fructose reductase (AKR1E2).